Here is a 405-residue protein sequence, read N- to C-terminus: Nicotinate phosphoribosyltransferase (405 aa).

Position 230 is a phosphohistidine; by autocatalysis (histidine 230).

The protein belongs to the NAPRTase family. In terms of processing, transiently phosphorylated on a His residue during the reaction cycle. Phosphorylation strongly increases the affinity for substrates and increases the rate of nicotinate D-ribonucleotide production. Dephosphorylation regenerates the low-affinity form of the enzyme, leading to product release.

The enzyme catalyses nicotinate + 5-phospho-alpha-D-ribose 1-diphosphate + ATP + H2O = nicotinate beta-D-ribonucleotide + ADP + phosphate + diphosphate. It participates in cofactor biosynthesis; NAD(+) biosynthesis; nicotinate D-ribonucleotide from nicotinate: step 1/1. Catalyzes the synthesis of beta-nicotinate D-ribonucleotide from nicotinate and 5-phospho-D-ribose 1-phosphate at the expense of ATP. The protein is Nicotinate phosphoribosyltransferase of Bordetella pertussis (strain Tohama I / ATCC BAA-589 / NCTC 13251).